The primary structure comprises 300 residues: UDP-N-acetylenolpyruvoylglucosamine reductase (300 aa).

Residues 28 to 193 enclose the FAD-binding PCMH-type domain; sequence KTGGPADVLA…LQATFALEKG (166 aa). Arg-172 is a catalytic residue. The active-site Proton donor is Ser-222. Glu-292 is an active-site residue.

The protein belongs to the MurB family. The cofactor is FAD.

The protein localises to the cytoplasm. The catalysed reaction is UDP-N-acetyl-alpha-D-muramate + NADP(+) = UDP-N-acetyl-3-O-(1-carboxyvinyl)-alpha-D-glucosamine + NADPH + H(+). It functions in the pathway cell wall biogenesis; peptidoglycan biosynthesis. In terms of biological role, cell wall formation. The chain is UDP-N-acetylenolpyruvoylglucosamine reductase from Enterococcus faecalis (strain ATCC 700802 / V583).